The primary structure comprises 306 residues: Glutathione transport system permease protein GsiC (306 aa).

At 1–8 the chain is on the cytoplasmic side; it reads MLNYVLKR. Residues 9 to 29 form a helical membrane-spanning segment; that stretch reads LLGLIPTLLIVAVLVFLFVHL. The Periplasmic segment spans residues 30–102; the sequence is LPGDPARLIA…SRFLPTLWLT (73 aa). In terms of domain architecture, ABC transmembrane type-1 spans 95-292; it reads FLPTLWLTIT…LEFILINLVV (198 aa). Residues 103–123 traverse the membrane as a helical segment; it reads ITSMIWAVLFGMAIGIAAAVW. The Cytoplasmic segment spans residues 124–134; the sequence is RNRWPDRLGMT. The chain crosses the membrane as a helical span at residues 135–155; the sequence is LAVTGISFPAFALGMLLMQIF. Over 156–168 the chain is Periplasmic; sequence SVDLGWLPTVGAD. A helical membrane pass occupies residues 169–189; sequence SWQHYILPSLTLGAAVASVMA. Residues 190–228 lie on the Cytoplasmic side of the membrane; the sequence is RFTRSSFVDVLSEDYMRTARAKGVSETWVVLKHGLRNAM. Residues 229-249 form a helical membrane-spanning segment; it reads IPVVTMMGLQFGFLLGGSIVV. Residues 250–278 lie on the Periplasmic side of the membrane; sequence EKVFNWPGLGRLLVDSVDMRDYPVIQAEV. Residues 279 to 299 form a helical membrane-spanning segment; sequence LLFSLEFILINLVVDVLYAAI. Over 300–306 the chain is Cytoplasmic; it reads NPAIRYK.

Belongs to the binding-protein-dependent transport system permease family. In terms of assembly, the complex is composed of two ATP-binding proteins (GsiA), two transmembrane proteins (GsiC and GsiD) and a solute-binding protein (GsiB).

The protein resides in the cell inner membrane. In terms of biological role, part of the ABC transporter complex GsiABCD involved in glutathione import. Probably responsible for the translocation of the substrate across the membrane. The polypeptide is Glutathione transport system permease protein GsiC (Salmonella paratyphi A (strain ATCC 9150 / SARB42)).